The primary structure comprises 445 residues: Eukaryotic translation initiation factor 3 subunit E (445 aa).

The region spanning 230-403 (FFNHVKGRDL…GHVVMGAQPL (174 aa)) is the PCI domain.

Belongs to the eIF-3 subunit E family. In terms of assembly, component of the eukaryotic translation initiation factor 3 (eIF-3) complex.

It localises to the cytoplasm. Functionally, component of the eukaryotic translation initiation factor 3 (eIF-3) complex, which is involved in protein synthesis of a specialized repertoire of mRNAs and, together with other initiation factors, stimulates binding of mRNA and methionyl-tRNAi to the 40S ribosome. The eIF-3 complex specifically targets and initiates translation of a subset of mRNAs involved in cell proliferation. The sequence is that of Eukaryotic translation initiation factor 3 subunit E (eIF3-S6) from Bombyx mori (Silk moth).